We begin with the raw amino-acid sequence, 374 residues long: uncharacterized protein (374 aa).

Residues 298-332 are a coiled coil; the sequence is TKEKLLKLHSEQKSLSEKINKLSGEKDIEQSMINN.

This is an uncharacterized protein from Acanthamoeba polyphaga (Amoeba).